Reading from the N-terminus, the 398-residue chain is Phosphoglycerate kinase (398 aa).

Substrate-binding positions include 21 to 23, Arg36, 59 to 62, Arg119, and Arg157; these read DFN and HLGR. ATP is bound by residues Lys208, Gly296, Glu327, and 354 to 357; that span reads GGDS.

Belongs to the phosphoglycerate kinase family. Monomer.

The protein resides in the cytoplasm. It catalyses the reaction (2R)-3-phosphoglycerate + ATP = (2R)-3-phospho-glyceroyl phosphate + ADP. The protein operates within carbohydrate degradation; glycolysis; pyruvate from D-glyceraldehyde 3-phosphate: step 2/5. This is Phosphoglycerate kinase from Lactococcus lactis subsp. cremoris (strain SK11).